A 340-amino-acid polypeptide reads, in one-letter code: Guanine nucleotide-binding protein subunit beta-4 (340 aa).

Position 2 is an N-acetylserine (Ser-2). Residue Ser-2 is modified to Phosphoserine. WD repeat units follow at residues 53–92 (GHLAKIYAMHWGYDSRLLVSASQDGKLIIWDSYTTNKMHA), 95–134 (LRSSWVMTCAYAPSGNYVACGGLDNICSIYNLKTREGNVR), 141–179 (GHTGYLSCCRFLDDGQIITSSGDTTCALWDIETGQQTTT), 182–221 (GHSGDVMSLSLSPDLKTFVSGACDASSKLWDIRDGMCRQS), and 224–263 (GHISDINAVSFFPSGYAFATGSDDATCRLFDLRADQELLL). His-266 is subject to Phosphohistidine. WD repeat units lie at residues 268–307 (NIICGITSVAFSKSGRLLLAGYDDFNCSVWDALKGGRAGV) and 310–339 (GHDNRVSCLGVTDDGMAVATGSWDSFLRIW).

The protein belongs to the WD repeat G protein beta family. As to quaternary structure, g proteins are composed of 3 units, alpha, beta and gamma. Widely expressed in the brain. Highest levels found in the hippocampus and layers v and vi of the neocortex.

Guanine nucleotide-binding proteins (G proteins) are involved as a modulator or transducer in various transmembrane signaling systems. The beta and gamma chains are required for the GTPase activity, for replacement of GDP by GTP, and for G protein-effector interaction. This is Guanine nucleotide-binding protein subunit beta-4 (Gnb4) from Rattus norvegicus (Rat).